We begin with the raw amino-acid sequence, 453 residues long: Ribulose bisphosphate carboxylase large chain (453 aa).

Residues 1–2 constitute a propeptide that is removed on maturation; it reads MS. An N-acetylproline modification is found at P3. K14 bears the N6,N6,N6-trimethyllysine mark. The substrate site is built by N123 and T173. K175 functions as the Proton acceptor in the catalytic mechanism. A substrate-binding site is contributed by K177. Positions 201, 203, and 204 each coordinate Mg(2+). Position 201 is an N6-carboxylysine (K201). H294 (proton acceptor) is an active-site residue. Substrate-binding residues include R295, H327, and S379.

It belongs to the RuBisCO large chain family. Type I subfamily. As to quaternary structure, heterohexadecamer of 8 large chains and 8 small chains; disulfide-linked. The disulfide link is formed within the large subunit homodimers. Mg(2+) is required as a cofactor. The disulfide bond which can form in the large chain dimeric partners within the hexadecamer appears to be associated with oxidative stress and protein turnover.

The protein resides in the plastid. The protein localises to the chloroplast. It catalyses the reaction 2 (2R)-3-phosphoglycerate + 2 H(+) = D-ribulose 1,5-bisphosphate + CO2 + H2O. The catalysed reaction is D-ribulose 1,5-bisphosphate + O2 = 2-phosphoglycolate + (2R)-3-phosphoglycerate + 2 H(+). RuBisCO catalyzes two reactions: the carboxylation of D-ribulose 1,5-bisphosphate, the primary event in carbon dioxide fixation, as well as the oxidative fragmentation of the pentose substrate in the photorespiration process. Both reactions occur simultaneously and in competition at the same active site. In Galium album (White bedstraw), this protein is Ribulose bisphosphate carboxylase large chain.